The primary structure comprises 709 residues: Translation initiation factor IF-2 (709 aa).

Basic and acidic residues-rich tracts occupy residues 47-70 and 105-121; these read DHQY…EKPK and KGKE…EKKL. The interval 47–157 is disordered; sequence DHQYRPNTGK…QPAKKEKELP (111 aa). Basic residues predominate over residues 125 to 137; that stretch reads AKKKGKGPAKGKK. Positions 138-149 are enriched in low complexity; it reads QAAPAAKQAPQP. In terms of domain architecture, tr-type G spans 240–409; it reads ERPPVVTIMG…LLVSEMEELK (170 aa). The segment at 249 to 256 is G1; that stretch reads GHVDHGKT. 249 to 256 serves as a coordination point for GTP; sequence GHVDHGKT. The interval 274–278 is G2; sequence GITQH. The G3 stretch occupies residues 295–298; that stretch reads DTPG. Residues 295–299 and 349–352 contribute to the GTP site; these read DTPGH and NKID. Residues 349–352 are G4; it reads NKID. A G5 region spans residues 385–387; that stretch reads SAK.

Belongs to the TRAFAC class translation factor GTPase superfamily. Classic translation factor GTPase family. IF-2 subfamily.

Its subcellular location is the cytoplasm. Functionally, one of the essential components for the initiation of protein synthesis. Protects formylmethionyl-tRNA from spontaneous hydrolysis and promotes its binding to the 30S ribosomal subunits. Also involved in the hydrolysis of GTP during the formation of the 70S ribosomal complex. The chain is Translation initiation factor IF-2 from Geobacillus kaustophilus (strain HTA426).